The primary structure comprises 282 residues: tRNA pseudouridine synthase A (282 aa).

The Nucleophile role is filled by aspartate 61. Tyrosine 119 contributes to the substrate binding site.

It belongs to the tRNA pseudouridine synthase TruA family. In terms of assembly, homodimer.

The enzyme catalyses uridine(38/39/40) in tRNA = pseudouridine(38/39/40) in tRNA. In terms of biological role, formation of pseudouridine at positions 38, 39 and 40 in the anticodon stem and loop of transfer RNAs. In Nostoc sp. (strain PCC 7120 / SAG 25.82 / UTEX 2576), this protein is tRNA pseudouridine synthase A.